We begin with the raw amino-acid sequence, 72 residues long: Lantibiotic lichenicidin VK21 A2 (72 aa).

The segment at 1-21 (MKTMKNSAAREAFKGANHPAG) is disordered. Residues 1–40 (MKTMKNSAAREAFKGANHPAGMVSEEELKALVGGNDVNPE) constitute a propeptide that is removed on maturation. At T41 the chain carries 2-oxobutanoic acid. Residues T42, T45, and T46 each carry the (Z)-2,3-didehydrobutyrine modification. The segment at residues 47 to 51 (SSWTC) is a cross-link (lanthionine (Ser-Cys)). Position 48 is a 2,3-didehydroalanine (Ser) (S48). (Z)-2,3-didehydrobutyrine is present on residues T53 and T57. Positions 59–63 (SASLC) form a cross-link, lanthionine (Ser-Cys). 2 cross-links (beta-methyllanthionine (Thr-Cys)) span residues 65–68 (TTKC) and 69–72 (TSRC). T66 carries the (Z)-2,3-didehydrobutyrine modification.

Post-translationally, maturation of lantibiotics involves the enzymatic conversion of Thr, and Ser into dehydrated AA and the formation of thioether bonds with cysteine. This is followed by membrane translocation and cleavage of the modified precursor. The 2,3-didehydrobutyrines are determined to be the Z-isomers.

It localises to the secreted. Its function is as follows. Lanthionine-containing peptide antibiotic (lantibiotic) active on Gram-positive bacteria. The bactericidal activity of lantibiotics is based on depolarization of energized bacterial cytoplasmic membranes, initiated by the formation of aqueous transmembrane pores. When present individually, LchA2 exhibits activity towards B.subtilis L1 (IC(50)=30 uM), Rhodococcus sp. SS2 (IC(50)=16.6 uM), M.luteus B1314 (IC(50)=2.6 uM), B.megaterium VKM41 (IC(50)=2 uM), S.aureus 209p (IC(50)=20 uM), B.pumilus 2001, B.globigii I, B.amyloliquefaciens I, M.smegmatis 1171 and M.phlei 1291. However, when combined with LchA1, it displays much stronger activity against B.subtilis L1 (IC(50)=0.64 uM), Rhodococcus sp. SS2 (IC(50)=0.64 uM), M.luteus B1314 (IC(50)=0.09 uM), B.megaterium VKM41 (IC(50)=0.12 uM) and S.aureus 209p (IC(50)=0.64 uM). The activity of the combined LchA1 and LchA2 peptides is strongest at a molar ratio of 1. Even when applied at 17-fold concentration of the highest IC(50) values for Gram-positive bacteria, neither the individual nor the combined peptides display activity against Gram-negative bacteria P.aeruginosa PAO1, P.putida I-97 or E.coli C600. The chain is Lantibiotic lichenicidin VK21 A2 from Bacillus licheniformis.